The primary structure comprises 423 residues: Large ribosomal subunit protein mL37 (423 aa).

Residues 1 to 29 constitute a mitochondrion transit peptide; the sequence is MALASGPARRVLARPWGLGLEGCGVPRRG.

It belongs to the mitochondrion-specific ribosomal protein mL37 family. In terms of assembly, component of the mitochondrial ribosome large subunit (39S) which comprises a 16S rRNA and about 50 distinct proteins.

Its subcellular location is the mitochondrion. The sequence is that of Large ribosomal subunit protein mL37 (MRPL37) from Bos taurus (Bovine).